The sequence spans 566 residues: NAD-dependent malic enzyme 3 (566 aa).

Tyr105 (proton donor) is an active-site residue. The active-site Proton acceptor is the Lys178. Positions 249, 250, and 273 each coordinate a divalent metal cation. NAD(+)-binding positions include 306–309 (AGTA), Asn423, and Asn468.

The protein belongs to the malic enzymes family. Requires Mg(2+) as cofactor. It depends on Mn(2+) as a cofactor.

The catalysed reaction is (S)-malate + NAD(+) = pyruvate + CO2 + NADH. It catalyses the reaction oxaloacetate + H(+) = pyruvate + CO2. Catalyzes the decarboxylation of malate to pyruvate. Can use NAD and NADP, but with a strong preference for NAD. Can also catalyze the decarboxylation of oxaloacetate. Involved in keeping the ATP levels high. The polypeptide is NAD-dependent malic enzyme 3 (malS) (Bacillus subtilis (strain 168)).